The following is a 597-amino-acid chain: Probable bifunctional ADP-ribose hydrolase/ADP-ribosyltransferase (597 aa).

The 201-residue stretch at 99-299 folds into the Macro domain; sequence SRLIKHGDLG…FYSKLLGPSH (201 aa). Residues Asp118, Ile119, and Asn133 each coordinate ADP-D-ribose. Zn(2+) is bound by residues Cys139, His144, and Cys146. ADP-D-ribose is bound by residues Cys146, Ile147, Asp148, Ser244, Thr245, Gly246, and Phe248. One can recognise a Deacetylase sirtuin-type domain in the interval 307–597; that stretch reads ENTPQGSLSL…IGRAIPLLLE (291 aa). NAD(+) is bound by residues Ala333, 418 to 421, and Gln438; that span reads SNAD. Residues Cys446, Cys450, Cys485, and Cys488 each coordinate Zn(2+). Val584 serves as a coordination point for NAD(+).

The protein in the N-terminal section; belongs to the MacroD-type family. Zn-Macro subfamily. In the C-terminal section; belongs to the sirtuin family. Class M subfamily. In terms of assembly, monomer. The cofactor is Zn(2+).

It carries out the reaction 5-O-(ADP-D-ribosyl)-L-glutamyl-[protein] + H2O = L-glutamyl-[protein] + ADP-D-ribose + H(+). In terms of biological role, is probably a bifunctional enzyme with ADP-ribosyltransferase and ADP-ribosylhydrolase activities. In vitro, can act as an ADP-ribosylhydrolase that hydrolyzes ADP-ribosyl-glutamate bonds. It can remove the ADP-ribosyl modification from the human mono-ADP-ribosylated PARP1 E988Q mutant, which is primarily modified on glutamate site with only minor aspartate contribution. It cannot hydrolyze the ADP-ribosyl-arpartate bond in ribosylated S.pyogenes GcvH-L. This Fusarium oxysporum f. sp. cubense protein is Probable bifunctional ADP-ribose hydrolase/ADP-ribosyltransferase.